A 306-amino-acid chain; its full sequence is Porphobilinogen deaminase (306 aa).

The residue at position 244 (Cys244) is an S-(dipyrrolylmethanemethyl)cysteine.

The protein belongs to the HMBS family. As to quaternary structure, monomer. Requires dipyrromethane as cofactor.

It carries out the reaction 4 porphobilinogen + H2O = hydroxymethylbilane + 4 NH4(+). It participates in porphyrin-containing compound metabolism; protoporphyrin-IX biosynthesis; coproporphyrinogen-III from 5-aminolevulinate: step 2/4. Functionally, tetrapolymerization of the monopyrrole PBG into the hydroxymethylbilane pre-uroporphyrinogen in several discrete steps. The protein is Porphobilinogen deaminase of Streptococcus sanguinis (strain SK36).